A 219-amino-acid polypeptide reads, in one-letter code: Ribose-5-phosphate isomerase A (219 aa).

Substrate contacts are provided by residues 28–31 (SGST), 81–84 (DGAD), and 94–97 (KGGG). Residue E103 is the Proton acceptor of the active site. Position 121 (K121) interacts with substrate.

This sequence belongs to the ribose 5-phosphate isomerase family. In terms of assembly, homodimer.

It carries out the reaction aldehydo-D-ribose 5-phosphate = D-ribulose 5-phosphate. It participates in carbohydrate degradation; pentose phosphate pathway; D-ribose 5-phosphate from D-ribulose 5-phosphate (non-oxidative stage): step 1/1. Its function is as follows. Catalyzes the reversible conversion of ribose-5-phosphate to ribulose 5-phosphate. This Mannheimia succiniciproducens (strain KCTC 0769BP / MBEL55E) protein is Ribose-5-phosphate isomerase A.